A 1027-amino-acid polypeptide reads, in one-letter code: Transient-receptor-potential-like protein (1027 aa).

A disordered region spans residues 1–22; the sequence is MTKEGMLSAAGRRFSRCAPSPR. 3 ANK repeats span residues 85–115, 117–141, and 163–192; these read MGRT…RIGN, LLCA…ITRE, and SDIS…SIEK. The next 6 membrane-spanning stretches (helical) occupy residues 355–375, 391–411, 473–493, 516–536, 559–579, and 640–660; these read FFLY…YILM, FFYY…ATFE, FLMI…YYIF, VAEA…IYLF, FCFI…QLYW, and MFIM…IAMM. 2 disordered regions span residues 825–929 and 1008–1027; these read KRDI…TYTS and ENVK…NVEK. Acidic residues predominate over residues 855 to 874; that stretch reads EESEEDDKSDETSSTDEEAD. Residues 910–923 are compositionally biased toward basic and acidic residues; that stretch reads RASEADSKLPDRPL. Positions 1008-1017 are enriched in polar residues; it reads ENVKSPSPAS.

Belongs to the transient receptor (TC 1.A.4) family. STrpC subfamily.

Its subcellular location is the membrane. Functionally, could mediate calcium entry and form a calcium permeant channel. The polypeptide is Transient-receptor-potential-like protein (trp-1) (Caenorhabditis elegans).